The chain runs to 380 residues: MTSTRKTNPLMKLINHSLIDLPTPSNISAWWNFGSLLGACLIIQITTGLFLAMHYSPDASTAFSSIAHITRDVNYGWMIRHLHANGASMFFICLFLHIGRGLYYGSFTHLETWNIGIILLFTTMMTAFMGYVLPWGQMSFWGATVITNLLSAIPYIGTDLVQWVWGGYSVNSPTLTRFFTLHFMLPFIITALTTLHLLFLHETGSNNPLGIPSHSDKITFHPYYTIKDILGLLLFLLALMTLTLLSPDLLSDPDNYTLANPLSTPPHIKPEWYFLFAYAILRSVPNKLGGVMALMLSILILTTIPALHMSKQQSMTFRPLSQFLYWLLIADLLILTWIGGQPVSYPFITISQVASTLYFTTILLLMPASSLIENHMLKWT.

Helical transmembrane passes span 33 to 53 (FGSLLGACLIIQITTGLFLAM), 77 to 98 (WMIRHLHANGASMFFICLFLHI), 113 to 133 (WNIGIILLFTTMMTAFMGYVL), and 178 to 198 (FFTLHFMLPFIITALTTLHLL). Heme b is bound by residues histidine 83 and histidine 97. Positions 182 and 196 each coordinate heme b. Histidine 201 is an a ubiquinone binding site. Helical transmembrane passes span 226 to 246 (IKDILGLLLFLLALMTLTLLS), 288 to 308 (LGGVMALMLSILILTTIPALH), 320 to 340 (LSQFLYWLLIADLLILTWIGG), and 347 to 367 (FITISQVASTLYFTTILLLMP).

It belongs to the cytochrome b family. As to quaternary structure, the cytochrome bc1 complex contains 11 subunits: 3 respiratory subunits (MT-CYB, CYC1 and UQCRFS1), 2 core proteins (UQCRC1 and UQCRC2) and 6 low-molecular weight proteins (UQCRH/QCR6, UQCRB/QCR7, UQCRQ/QCR8, UQCR10/QCR9, UQCR11/QCR10 and a cleavage product of UQCRFS1). This cytochrome bc1 complex then forms a dimer. The cofactor is heme b.

Its subcellular location is the mitochondrion inner membrane. In terms of biological role, component of the ubiquinol-cytochrome c reductase complex (complex III or cytochrome b-c1 complex) that is part of the mitochondrial respiratory chain. The b-c1 complex mediates electron transfer from ubiquinol to cytochrome c. Contributes to the generation of a proton gradient across the mitochondrial membrane that is then used for ATP synthesis. The protein is Cytochrome b (MT-CYB) of Pongo abelii (Sumatran orangutan).